We begin with the raw amino-acid sequence, 342 residues long: Phosphoribosylformylglycinamidine cyclo-ligase (342 aa).

The protein belongs to the AIR synthase family.

It localises to the cytoplasm. It catalyses the reaction 2-formamido-N(1)-(5-O-phospho-beta-D-ribosyl)acetamidine + ATP = 5-amino-1-(5-phospho-beta-D-ribosyl)imidazole + ADP + phosphate + H(+). Its pathway is purine metabolism; IMP biosynthesis via de novo pathway; 5-amino-1-(5-phospho-D-ribosyl)imidazole from N(2)-formyl-N(1)-(5-phospho-D-ribosyl)glycinamide: step 2/2. This Staphylococcus aureus (strain MSSA476) protein is Phosphoribosylformylglycinamidine cyclo-ligase.